Here is an 824-residue protein sequence, read N- to C-terminus: Protein-glutamine gamma-glutamyltransferase K (824 aa).

Over residues 1 to 10 (MEGPRSDVGR) the composition is skewed to basic and acidic residues. Disordered regions lie at residues 1–44 (MEGP…GGRS) and 61–110 (DDWG…AAGD). Thr-20 carries the phosphothreonine modification. Phosphoserine is present on residues Ser-22, Ser-70, Ser-92, Ser-100, and Ser-103. Residues 65–76 (PEPSGSRSRGTS) show a composition bias toward low complexity. Basic and acidic residues predominate over residues 85 to 100 (GDSRGRDSRGGRRPES). Residues Cys-385, His-444, and Asp-467 contribute to the active site. Residues Asn-507, Asp-509, Glu-556, and Glu-561 each contribute to the Ca(2+) site. Residues 801-824 (RGFSEAVGDSRSGENIPMAFRGGA) form a disordered region. Residue Ser-812 is modified to Phosphoserine.

Belongs to the transglutaminase superfamily. Transglutaminase family. In terms of assembly, interacts with PLAAT4. It depends on Ca(2+) as a cofactor. In terms of processing, palmitoylated. The membrane anchorage region possesses a cluster of five cysteines within which fatty acid(s) may become thioester-linked. It is subject to phorbol ester-stimulated phosphorylation and is hypersensitive to proteolysis, which releases the enzyme in a soluble form. Post-translationally, tyrosine-phosphorylated.

It is found in the membrane. It carries out the reaction L-glutaminyl-[protein] + L-lysyl-[protein] = [protein]-L-lysyl-N(6)-5-L-glutamyl-[protein] + NH4(+). Its function is as follows. Catalyzes the cross-linking of proteins and the conjugation of polyamines to proteins. Responsible for cross-linking epidermal proteins during formation of the stratum corneum. Involved in cell proliferation. This chain is Protein-glutamine gamma-glutamyltransferase K (Tgm1), found in Rattus norvegicus (Rat).